We begin with the raw amino-acid sequence, 696 residues long: Gametogenetin-binding protein 2 (696 aa).

A phosphoserine mark is found at Ser360 and Ser602.

As to quaternary structure, interacts with isoform 1 of GGN. In terms of tissue distribution, testis-specific.

The protein resides in the cytoplasmic vesicle. Its function is as follows. May be involved in spermatogenesis. The polypeptide is Gametogenetin-binding protein 2 (Ggnbp2) (Mus musculus (Mouse)).